The following is a 187-amino-acid chain: Putative acyl-coenzyme A oxidase At3g06690 (187 aa).

The interval 1–21 (MTKEPIYSPRMLHRDPDSPRP) is disordered.

This sequence belongs to the acyl-CoA oxidase family.

It catalyses the reaction a 2,3-saturated acyl-CoA + O2 = a (2E)-enoyl-CoA + H2O2. This is Putative acyl-coenzyme A oxidase At3g06690 from Arabidopsis thaliana (Mouse-ear cress).